Reading from the N-terminus, the 454-residue chain is Isthmin-1 (454 aa).

The N-terminal stretch at 1-29 (MVRLAAELLLLLGLLLLTLHITVLRGSGA) is a signal peptide. 3 disordered regions span residues 29–93 (ASDR…PRSF), 125–144 (PDSE…WSLP), and 161–209 (TNSG…STDG). Positions 38-55 (GNNNLNLESDSTSETSFP) are enriched in polar residues. A compositionally biased stretch (basic and acidic residues) spans 128 to 137 (EAEKDQHPEN). Positions 208–252 (DGEGDWSLWSVCSVTCGNGNQKRTRSCGYACIATESRTCDRPNCP) constitute a TSP type-1 domain. 3 disulfide bridges follow: Cys219/Cys246, Cys223/Cys251, and Cys234/Cys238. In terms of domain architecture, AMOP spans 279–442 (LFEVDMDSCE…QKCTESPSDE (164 aa)).

It belongs to the isthmin family. In terms of assembly, interacts with integrin ITGAV/ITGB5.

The protein localises to the secreted. Acts as an angiogenesis inhibitor. This Mus musculus (Mouse) protein is Isthmin-1 (Ism1).